The following is a 246-amino-acid chain: MGESPKGLRKGTWTTEEDILLRQCIDKYGEGKWHRVPLRTGLNRCRKSCRLRWLNYLKPSIKRGKLCSDEVDLVLRLHKLLGNRWSLIAGRLPGRTANDVKNYWNTHLSKKHDERCCKTKMINKNITSHPTSSAQKIDVLKPRPRSFSDKNSCNDVNILPKVDVVPLHLGLNNNYVCESSITCNKDEQKDKLININLLDGDNMWWESLLEADVLGPEATETAKGVTLPLDFEQIWARFDEETLELN.

HTH myb-type domains follow at residues 5–61 (PKGL…KPSI) and 62–112 (KRGK…SKKH). DNA-binding regions (H-T-H motif) lie at residues 33–57 (WHRV…LNYL) and 85–108 (WSLI…NTHL).

As to quaternary structure, interacts with BHLH002/EGL3/MYC146, BHLH012/MYC1 and BHLH042/TT8.

The protein localises to the nucleus. In terms of biological role, transcription activator, when associated with BHLH002/EGL3/MYC146, BHLH012/MYC1, or BHLH042/TT8. This is Transcription factor MYB113 (MYB113) from Arabidopsis thaliana (Mouse-ear cress).